Here is a 111-residue protein sequence, read N- to C-terminus: BET1-like protein (111 aa).

The Cytoplasmic segment spans residues 1-86 (MADWARAQSP…MARSGRDNRK (86 aa)). Residues serine 9 and serine 37 each carry the phosphoserine modification. Residues 15–77 (EILDRENKRM…TGSVKRFSTM (63 aa)) form the t-SNARE coiled-coil homology domain. The chain crosses the membrane as a helical; Anchor for type IV membrane protein span at residues 87–107 (LLCGVAVGLIVAFFILSYLLS). The Lumenal portion of the chain corresponds to 108 to 111 (RART).

In terms of assembly, component of a SNARE complex consisting of STX5, YKT6, GOSR1 and BET1L. Interacts with STX5.

It localises to the golgi apparatus membrane. It is found in the golgi apparatus. The protein resides in the trans-Golgi network membrane. Vesicle SNARE required for targeting and fusion of retrograde transport vesicles with the Golgi complex. Required for the integrity of the Golgi complex. The polypeptide is BET1-like protein (Bos taurus (Bovine)).